We begin with the raw amino-acid sequence, 637 residues long: Early transcription factor 70 kDa subunit (637 aa).

The Helicase ATP-binding domain maps to 32-185 (RTIIDENRSV…GHIIDLMSEE (154 aa)). 45 to 52 (HIMGSGKT) is an ATP binding site. The DEXH box motif lies at 135–138 (DKAH). One can recognise a Helicase C-terminal domain in the interval 327–507 (KFKYFINRIQ…VLPFDIKKLL (181 aa)).

The protein belongs to the helicase family. VETF subfamily. Heterodimer of a 70 kDa and a 82 kDa subunit. Part of the early transcription complex composed of ETF, RAP94/OPG109, and the DNA-directed RNA polymerase.

The protein resides in the virion. In terms of biological role, acts with RNA polymerase to initiate transcription from early gene promoters. Is recruited by the RPO-associated protein of 94 kDa RAP94/OPG109 to form the early transcription complex, which also contains the core RNA polymerase. ETF heterodimer binds to early gene promoters. The protein is Early transcription factor 70 kDa subunit (OPG118) of Homo sapiens (Human).